The sequence spans 199 residues: ATP-dependent Clp protease proteolytic subunit (199 aa).

S97 acts as the Nucleophile in catalysis. Residue H122 is part of the active site.

This sequence belongs to the peptidase S14 family. Fourteen ClpP subunits assemble into 2 heptameric rings which stack back to back to give a disk-like structure with a central cavity, resembling the structure of eukaryotic proteasomes.

It is found in the cytoplasm. The catalysed reaction is Hydrolysis of proteins to small peptides in the presence of ATP and magnesium. alpha-casein is the usual test substrate. In the absence of ATP, only oligopeptides shorter than five residues are hydrolyzed (such as succinyl-Leu-Tyr-|-NHMec, and Leu-Tyr-Leu-|-Tyr-Trp, in which cleavage of the -Tyr-|-Leu- and -Tyr-|-Trp bonds also occurs).. Functionally, cleaves peptides in various proteins in a process that requires ATP hydrolysis. Has a chymotrypsin-like activity. Plays a major role in the degradation of misfolded proteins. The polypeptide is ATP-dependent Clp protease proteolytic subunit (Geotalea daltonii (strain DSM 22248 / JCM 15807 / FRC-32) (Geobacter daltonii)).